Here is a 728-residue protein sequence, read N- to C-terminus: MSPAPAATQAPVSVSLFDLSTDAPVLQGLRLVSHFPEEALAQSLQTSCPGSEEQISPERRPFQGALDISEKLFCSTCDQVFQNHQEQREHYKLDWHRFNLKQRLKDKPLLSALDFEKQSSTGDLSSISGSEDSDSDSEEDLQILDEERADLEKPTRPQGFHPHRVLFQNAQGQFLYAYRCVLGPRHASASTYCVVPLEESELLLQNLQTGGPRDCVVLMAAAGHFAGAIFQGREVLTHKTFHRYTVRAKRGTAQGLRDARGAAAHSAGASLRRYNEAALYKEVRDLLAGPAWAKALEEAGTILLRAPRSGRSLFFGGREAPLRRGDPRLWDIPLATRRPTFQELQRVVHKLTTLHIHGEDPRETSRLDLPQTHRKRVRERKVIEEESKVPSDENEALGQNKEAPTQGSESEGGDGSQVELELVEVTLGTLDLREFDVFPKQRRRKRNKRERKQDLESGAQMTLSQQPKEDEALSGSAPLRPPLDEATSPCQSELWDVLLAACRAGDVGMLKDRLTASPLHPGVLPLLSAPLGSGGFTLLHAAAAAGRGSVVRLLLEAGADPTVQDSRARPPYTVAADRSTRNEFRRFMEKNPDAYDYSKAQVPGPLTAEMEARQATRRREQKAARRHREEQQRKQQEQEKQEQEEQQRFAALSDREKRALAAERRLAAQLGALNPQTPDPAITVSNIPRCWSCGMSLQGLVPFHYLDFSFCSTRCLRDHRCQAGKPSS.

Residues 72–96 form a C2H2-type zinc finger; that stretch reads LFCSTCDQVFQNHQEQREHYKLDWH. Positions 120-130 are enriched in low complexity; the sequence is STGDLSSISGS. Residues 120-140 form a disordered region; sequence STGDLSSISGSEDSDSDSEED. Positions 131 to 140 are enriched in acidic residues; the sequence is EDSDSDSEED. The 144-residue stretch at 211-354 folds into the VLRF1 domain; it reads GPRDCVVLMA…QRVVHKLTTL (144 aa). Gln-254 is an active-site residue. A Phosphoserine modification is found at Ser-266. 2 disordered regions span residues 359-416 and 442-487; these read EDPR…GDGS and RRRK…DEAT. Positions 380–391 are enriched in basic and acidic residues; the sequence is RKVIEEESKVPS. The ANK 1 repeat unit spans residues 493–526; the sequence is ELWDVLLAACRAGDVGMLKDRLTASPLHPGVLPL. Ser-533 bears the Phosphoserine mark. An ANK 2 repeat occupies 534-563; it reads GGFTLLHAAAAAGRGSVVRLLLEAGADPTV. Residues 589–656 are disordered; that stretch reads EKNPDAYDYS…QRFAALSDRE (68 aa). The residue at position 607 (Thr-607) is a Phosphothreonine. Positions 608-659 form a coiled coil; sequence AEMEARQATRRREQKAARRHREEQQRKQQEQEKQEQEEQQRFAALSDREKRA. The segment covering 610 to 656 has biased composition (basic and acidic residues); sequence MEARQATRRREQKAARRHREEQQRKQQEQEKQEQEEQQRFAALSDRE. A VCP/p97-interacting motif (VIM) region spans residues 654–666; it reads DREKRALAAERRL.

It belongs to the ANKZF1/VMS1 family. As to quaternary structure, interacts (via VIM motif) with VCP.

It is found in the cytoplasm. Its function is as follows. Endonuclease that cleaves polypeptidyl-tRNAs downstream of the ribosome-associated quality control (RQC) pathway to release incompletely synthesized polypeptides for degradation. The RQC pathway disassembles aberrantly stalled translation complexes to recycle or degrade the constituent parts. ANKZF1 acts downstream disassembly of stalled ribosomes and specifically cleaves off the terminal 3'-CCA nucleotides universal to all tRNAs from polypeptidyl-tRNAs, releasing (1) ubiquitinated polypeptides from 60S ribosomal subunit for degradation and (2) cleaved tRNAs. ANKZF1-cleaved tRNAs are then repaired and recycled by ELAC1 and TRNT1. Also plays a role in the cellular response to hydrogen peroxide and in the maintenance of mitochondrial integrity under conditions of cellular stress. The chain is tRNA endonuclease ANKZF1 (ANKZF1) from Bos taurus (Bovine).